We begin with the raw amino-acid sequence, 400 residues long: Enoyl-[acyl-carrier-protein] reductase [NADH] (400 aa).

NAD(+) contacts are provided by residues 48–53 (GSSSGY), 74–75 (FE), 111–112 (DA), and 139–140 (LA). Residue Y225 participates in substrate binding. Y235 functions as the Proton donor in the catalytic mechanism. NAD(+)-binding positions include K244 and 273 to 275 (VVT).

The protein belongs to the TER reductase family. Monomer.

It catalyses the reaction a 2,3-saturated acyl-[ACP] + NAD(+) = a (2E)-enoyl-[ACP] + NADH + H(+). It participates in lipid metabolism; fatty acid biosynthesis. In terms of biological role, involved in the final reduction of the elongation cycle of fatty acid synthesis (FAS II). Catalyzes the reduction of a carbon-carbon double bond in an enoyl moiety that is covalently linked to an acyl carrier protein (ACP). In Shewanella loihica (strain ATCC BAA-1088 / PV-4), this protein is Enoyl-[acyl-carrier-protein] reductase [NADH].